A 274-amino-acid chain; its full sequence is Glutamate--cysteine ligase regulatory subunit (274 aa).

Lys-263 is modified (N6-acetyllysine).

Belongs to the aldo/keto reductase family. Glutamate--cysteine ligase light chain subfamily. In terms of assembly, heterodimer of a catalytic heavy chain and a regulatory light chain. In all tissues examined. Highest levels in skeletal muscle.

It functions in the pathway sulfur metabolism; glutathione biosynthesis; glutathione from L-cysteine and L-glutamate: step 1/2. The protein is Glutamate--cysteine ligase regulatory subunit (GCLM) of Homo sapiens (Human).